The sequence spans 137 residues: Small ribosomal subunit protein uS12 (137 aa).

Positions 1 to 55 (MPTINQLVRKPRKSKTKQSDSPALNRGFNSKKKQFTNLNSPQKRGVCTRVGTMTP) are disordered. Aspartate 102 is modified (3-methylthioaspartic acid). The tract at residues 118 to 137 (SGVDGRRQGRSLYGTKKPKN) is disordered.

The protein belongs to the universal ribosomal protein uS12 family. In terms of assembly, part of the 30S ribosomal subunit. Contacts proteins S8 and S17. May interact with IF1 in the 30S initiation complex.

In terms of biological role, with S4 and S5 plays an important role in translational accuracy. Its function is as follows. Interacts with and stabilizes bases of the 16S rRNA that are involved in tRNA selection in the A site and with the mRNA backbone. Located at the interface of the 30S and 50S subunits, it traverses the body of the 30S subunit contacting proteins on the other side and probably holding the rRNA structure together. The combined cluster of proteins S8, S12 and S17 appears to hold together the shoulder and platform of the 30S subunit. The sequence is that of Small ribosomal subunit protein uS12 from Staphylococcus epidermidis (strain ATCC 35984 / DSM 28319 / BCRC 17069 / CCUG 31568 / BM 3577 / RP62A).